A 1266-amino-acid chain; its full sequence is Phosphatidylinositol 3,4,5-trisphosphate 5-phosphatase 2A (1266 aa).

Positions 15–111 (WMHRDLSRAA…GLVTTLLYPV (97 aa)) constitute an SH2 domain. Positions 114–123 (EETTEDRDYS) are enriched in basic and acidic residues. Disordered regions lie at residues 114-159 (EETT…NVTA) and 879-951 (DMGG…DATT). Residues 136–159 (TASTSSMTGSALVSTDTPPENVTA) show a composition bias toward polar residues. Composition is skewed to basic and acidic residues over residues 915–924 (RVSEEGEKSS) and 931–944 (TKEE…KQDP). An NPXY motif motif is present at residues 958–961 (NPAY). A Phosphotyrosine modification is found at Y961. Disordered stretches follow at residues 986 to 1132 (PLAN…SALD) and 1147 to 1174 (EVEY…SFPS). The segment covering 994–1012 (PPAGSVGKSKPPSGSSAQG) has biased composition (low complexity). The segment covering 1045–1056 (RPPPDFPPPPLP) has biased composition (pro residues). An SAM domain is found at 1203-1266 (SVDCSVGEWL…LLASLKQQQK (64 aa)).

This sequence belongs to the inositol 1,4,5-trisphosphate 5-phosphatase family. In terms of processing, tyrosine phosphorylated by the members of the SRC family after exposure to a diverse array of extracellular stimuli.

It localises to the cytoplasm. It is found in the cytosol. Its subcellular location is the cytoskeleton. The protein localises to the membrane. The protein resides in the cell projection. It localises to the filopodium. It is found in the lamellipodium. Its subcellular location is the nucleus. The protein localises to the nucleus speckle. The catalysed reaction is a 1,2-diacyl-sn-glycero-3-phospho-(1D-myo-inositol-3,4,5-trisphosphate) + H2O = a 1,2-diacyl-sn-glycero-3-phospho-(1D-myo-inositol-3,4-bisphosphate) + phosphate. Functionally, phosphatidylinositol (PtdIns) phosphatase that specifically hydrolyzes the 5-phosphate of phosphatidylinositol-3,4,5-trisphosphate (PtdIns(3,4,5)P3) to produce PtdIns(3,4)P2, thereby negatively regulating the PI3K (phosphoinositide 3-kinase) pathways. Plays a central role in regulation of PI3K-dependent insulin signaling, although the precise molecular mechanisms and signaling pathways remain unclear. Part of a signaling pathway that regulates actin cytoskeleton remodeling. Required for the maintenance and dynamic remodeling of actin structures as well as in endocytosis, having a major impact on ligand-induced EGFR internalization and degradation. Participates in regulation of cortical and submembraneous actin. Regulates cell adhesion and cell spreading. Acts as a negative regulator of the FC-gamma-RIIA receptor (FCGR2A). Mediates signaling from the FC-gamma-RIIB receptor (FCGR2B), playing a central role in terminating signal transduction from activating immune/hematopoietic cell receptor systems. May also hydrolyze PtdIns(1,3,4,5)P4, and could thus affect the levels of the higher inositol polyphosphates like InsP6. The protein is Phosphatidylinositol 3,4,5-trisphosphate 5-phosphatase 2A (inppl1a) of Danio rerio (Zebrafish).